The chain runs to 149 residues: Large ribosomal subunit protein bL9 (149 aa).

This sequence belongs to the bacterial ribosomal protein bL9 family.

In terms of biological role, binds to the 23S rRNA. This chain is Large ribosomal subunit protein bL9, found in Mannheimia succiniciproducens (strain KCTC 0769BP / MBEL55E).